A 158-amino-acid polypeptide reads, in one-letter code: Crossover junction endodeoxyribonuclease RuvC (158 aa).

Active-site residues include aspartate 7, glutamate 66, and aspartate 139. Aspartate 7, glutamate 66, and aspartate 139 together coordinate Mg(2+).

It belongs to the RuvC family. Homodimer which binds Holliday junction (HJ) DNA. The HJ becomes 2-fold symmetrical on binding to RuvC with unstacked arms; it has a different conformation from HJ DNA in complex with RuvA. In the full resolvosome a probable DNA-RuvA(4)-RuvB(12)-RuvC(2) complex forms which resolves the HJ. The cofactor is Mg(2+).

It localises to the cytoplasm. The enzyme catalyses Endonucleolytic cleavage at a junction such as a reciprocal single-stranded crossover between two homologous DNA duplexes (Holliday junction).. Functionally, the RuvA-RuvB-RuvC complex processes Holliday junction (HJ) DNA during genetic recombination and DNA repair. Endonuclease that resolves HJ intermediates. Cleaves cruciform DNA by making single-stranded nicks across the HJ at symmetrical positions within the homologous arms, yielding a 5'-phosphate and a 3'-hydroxyl group; requires a central core of homology in the junction. The consensus cleavage sequence is 5'-(A/T)TT(C/G)-3'. Cleavage occurs on the 3'-side of the TT dinucleotide at the point of strand exchange. HJ branch migration catalyzed by RuvA-RuvB allows RuvC to scan DNA until it finds its consensus sequence, where it cleaves and resolves the cruciform DNA. The protein is Crossover junction endodeoxyribonuclease RuvC of Nitratiruptor sp. (strain SB155-2).